The following is a 249-amino-acid chain: Methylthioribulose-1-phosphate dehydratase (249 aa).

Cys-102 provides a ligand contact to substrate. Residues His-120 and His-122 each contribute to the Zn(2+) site. Glu-148 functions as the Proton donor/acceptor in the catalytic mechanism. His-205 contacts Zn(2+).

It belongs to the aldolase class II family. MtnB subfamily. Zn(2+) serves as cofactor.

The protein resides in the cytoplasm. It carries out the reaction 5-(methylsulfanyl)-D-ribulose 1-phosphate = 5-methylsulfanyl-2,3-dioxopentyl phosphate + H2O. Its pathway is amino-acid biosynthesis; L-methionine biosynthesis via salvage pathway; L-methionine from S-methyl-5-thio-alpha-D-ribose 1-phosphate: step 2/6. Functionally, catalyzes the dehydration of methylthioribulose-1-phosphate (MTRu-1-P) into 2,3-diketo-5-methylthiopentyl-1-phosphate (DK-MTP-1-P). The sequence is that of Methylthioribulose-1-phosphate dehydratase from Botryotinia fuckeliana (strain B05.10) (Noble rot fungus).